The chain runs to 282 residues: Homeobox protein vex1 (282 aa).

Residues 129–188 (ASRARTKFTAEQLEELEKSFKENRYIGSSEKRRLSKVLKLSENQIKTWFQNRRMKFKRQT) constitute a DNA-binding region (homeobox).

It is found in the nucleus. Its function is as follows. Transcriptional repressor. Acts in a ventral signaling pathway downstream of bmp4 to antagonize the Spemann organizer and ventrally pattern the embryonic mesoderm. Represses transcription of the dorsal genes gsc and otx2. The protein is Homeobox protein vex1 of Xenopus tropicalis (Western clawed frog).